The following is a 506-amino-acid chain: Gamma-aminobutyric acid receptor subunit epsilon (506 aa).

Residues 1-17 (MLPKVLLMLLNMFLALQ) form the signal peptide. The Extracellular portion of the chain corresponds to 18–277 (WRVGPHIKLE…MTFFFNVSRR (260 aa)). The interval 32 to 65 (AQDKVVFGPQPQPSGKKLPARETELTADHTTERP) is disordered. Residues 50 to 65 (PARETELTADHTTERP) show a composition bias toward basic and acidic residues. N-linked (GlcNAc...) asparagine glycosylation is present at Asn-135. Cys-196 and Cys-210 are joined by a disulfide. The N-linked (GlcNAc...) asparagine glycan is linked to Asn-253. Residues 278-298 (FGFIVFQNYIPSSVTTMLSWV) traverse the membrane as a helical segment. Residues 299–308 (SFWIKIEAAA) lie on the Cytoplasmic side of the membrane. A helical membrane pass occupies residues 309–328 (ARASVGVSSVLTMATLGTFS). Residues 329–344 (RKNFPRVSYLTALDFY) lie on the Extracellular side of the membrane. A helical membrane pass occupies residues 345–365 (IAICFVLCFCTLLEFTVLNFL). At 366–485 (TYNNIERQAS…HVYRLDNYSR (120 aa)) the chain is on the cytoplasmic side. Residues 486 to 506 (VLFPITFFFFNVVYWVICLNL) form a helical membrane-spanning segment.

It belongs to the ligand-gated ion channel (TC 1.A.9) family. Gamma-aminobutyric acid receptor (TC 1.A.9.5) subfamily. GABRE sub-subfamily. In terms of assembly, heteropentamer, formed by a combination of alpha (GABRA1-6), beta (GABRB1-3), gamma (GABRG1-3), delta (GABRD), epsilon (GABRE), rho (GABRR1-3), pi (GABRP) and theta (GABRQ) chains, each subunit exhibiting distinct physiological and pharmacological properties. Expressed in brain and heart. Strongly expressed in locus ceruleus from the first postnatal day. Weakly expressed in other brainstem nuclei and in the hypothalamus. Found in the cerebral cortex of pups.

Its subcellular location is the cell membrane. The protein resides in the postsynaptic cell membrane. It carries out the reaction chloride(in) = chloride(out). Functionally, epsilon subunit of the heteropentameric ligand-gated chloride channel gated by gamma-aminobutyric acid (GABA), a major inhibitory neurotransmitter in the brain. GABA-gated chloride channels, also named GABA(A) receptors (GABAAR), consist of five subunits arranged around a central pore and contain GABA active binding site(s) located at the alpha and beta subunit interfaces. When activated by GABA, GABAARs selectively allow the flow of chloride anions across the cell membrane down their electrochemical gradient. GABARs containing epsilon subunit may also permit spontaneous chloride channel activity while preserving the structural information required for GABA-gated openings. GABARs containing epsilon subunit may regulate cardiac function. In Rattus norvegicus (Rat), this protein is Gamma-aminobutyric acid receptor subunit epsilon.